A 224-amino-acid polypeptide reads, in one-letter code: Claudin-19 (224 aa).

Over M1–Q7 the chain is Cytoplasmic. The helical transmembrane segment at L8–P28 threads the bilayer. Topologically, residues Q29–R81 are extracellular. Residues C54 and C64 are joined by a disulfide bond. The helical transmembrane segment at A82 to M102 threads the bilayer. Topologically, residues K103 to R117 are cytoplasmic. Residues V118–S138 form a helical membrane-spanning segment. Topologically, residues W139–E160 are extracellular. The chain crosses the membrane as a helical span at residues F161–F181. Residues L182–V224 lie on the Cytoplasmic side of the membrane.

Belongs to the claudin family. As to quaternary structure, can form homo- and heteropolymeric tight junction strands. Interacts with other claudins including CLDN3, CLDN10, CLDN16 and CLDN18 with highest affinity for CLDN16. Interacts (via PDZ-binding motif TRV) with TJP1 (via PDZ domain). (Microbial infection) Interacts (via both extracellular domains) with Clostridium perfringens enterotoxin CPE; the interaction disrupts claudin assembly in tight junctions. Expressed in the corticomedullary axis of the TAL, specifically in the cortex and the outer stripe of outer medulla (OSOM) zone (at protein level). Expressed in peripheral nervous system, in Schwan cells (at protein level).

It localises to the cell junction. It is found in the tight junction. Its subcellular location is the cell membrane. The catalysed reaction is Mg(2+)(in) = Mg(2+)(out). The enzyme catalyses Ca(2+)(in) = Ca(2+)(out). It catalyses the reaction Na(+)(in) = Na(+)(out). It carries out the reaction K(+)(in) = K(+)(out). The catalysed reaction is Rb(+)(in) = Rb(+)(out). The enzyme catalyses Cs(+)(in) = Cs(+)(out). It catalyses the reaction Li(+)(in) = Li(+)(out). Forms paracellular channels: coassembles with CLDN16 into tight junction strands with cation-selective channels through the strands, conveying epithelial permeability in a process known as paracellular tight junction permeability. Involved in the maintenance of ion gradients along the nephron. In the thick ascending limb (TAL) of Henle's loop, facilitates sodium paracellular permeability from the interstitial compartment to the lumen, contributing to the lumen-positive transepithelial potential that drives paracellular magnesium and calcium reabsorption. Forms paracellular barriers on its own. In the peripheral nervous system, represents a major constituent of the tight junctions in Schwann cells and contributes to electrical sealing. During retinal neurogenesis, may regulate the barrier properties of tight junctions in retinal pigment epithelium, required for proper retinal tissue differentiation and vision. The sequence is that of Claudin-19 from Mus musculus (Mouse).